The chain runs to 482 residues: MFS-type transporter traF (482 aa).

The span at 1-14 (MTSGTEQATLNTEE) shows a compositional bias: polar residues. The tract at residues 1 to 22 (MTSGTEQATLNTEENGSDSDHL) is disordered. 2 N-linked (GlcNAc...) asparagine glycosylation sites follow: Asn15 and Asn45. The next 9 membrane-spanning stretches (helical) occupy residues 52–72 (VFIT…SSVM), 89–109 (LSIL…LLFG), 125–145 (VFLF…ATIF), 149–169 (FLCG…LADL), 176–196 (GIAV…GPLV), 209–229 (WTQW…FVFC), 275–295 (PILA…YLCF), 312–332 (IGSL…VIII), and 354–374 (LVPM…FAWT). Asn376 carries an N-linked (GlcNAc...) asparagine glycan. The next 3 membrane-spanning stretches (helical) occupy residues 379-399 (LPWA…LLIF), 427-447 (LLGA…GVPW), and 448-468 (AMSL…LFFI).

This sequence belongs to the major facilitator superfamily. CAR1 family.

It is found in the membrane. In terms of biological role, MFS-type transporter; part of the tra gene cluster that produces terrestric acid. The clavatol biosynthesis cluster cla and the terrestric acid cluster tra are both involved in the production of peniphenones and penilactones. The protein is MFS-type transporter traF of Penicillium crustosum (Blue mold fungus).